Here is a 317-residue protein sequence, read N- to C-terminus: MKTWQELTITVHRDAEEAVSNMLIEAGSQGVAISDSADYLGQPDRFGEIFPDVTQDDMITITGYFPESFAITEVTASLEKQVATLKSTGLETGPVSIASHELEEEDWAENWKKYYEPARITHDLTIVPSWTDYDAKPEEKVIKLDPGMAFGTGTHPTTKMSLFALEQVLRGGETVIDVGTGSGVLSIASSLLGAKEIYAYDLDDVAVRVAQENIDLNANTENIHVAAGDLLKGVTIQADVIVANILADILIHLTDDAYRLVKDEGYLIMSGIISEKWPMVRASAEKAGFFLETHMIQGEWNACVFKKTDDMSGVIGG.

S-adenosyl-L-methionine contacts are provided by Thr-158, Gly-179, Asp-201, and Asn-244.

The protein belongs to the methyltransferase superfamily. PrmA family.

The protein localises to the cytoplasm. It catalyses the reaction L-lysyl-[protein] + 3 S-adenosyl-L-methionine = N(6),N(6),N(6)-trimethyl-L-lysyl-[protein] + 3 S-adenosyl-L-homocysteine + 3 H(+). In terms of biological role, methylates ribosomal protein L11. This is Ribosomal protein L11 methyltransferase from Streptococcus uberis (strain ATCC BAA-854 / 0140J).